The chain runs to 114 residues: PDZK1-interacting protein 1 (114 aa).

Residues 1 to 28 (MSALSLLILGLLTAVPPASCQQGLGNLQ) are Extracellular-facing. The helical transmembrane segment at 29–51 (PWMQGLIAVAVFLVLVAIAFAVN) threads the bilayer. Residues 52–114 (HFWCQEEPEP…EEGKVRSTPM (63 aa)) are Cytoplasmic-facing. Serine 85 bears the Phosphoserine mark. Residues 94–114 (EHENAYENVPEEEGKVRSTPM) are disordered. The segment covering 105–114 (EEGKVRSTPM) has biased composition (basic and acidic residues).

This sequence belongs to the PDZK1-interacting protein 1/SMIM24 family. As to quaternary structure, forms a heterodimer (via N-terminal transmembrane helix) with SLC5A2/SGLT2 (via TM13); this interaction enhances SLC5A2 transporter activity. Interacts with PDZK1.

It is found in the apical cell membrane. Its function is as follows. Auxiliary protein of electrogenic Na(+)-coupled sugar symporter SLC5A2/SGLT2 and SLC5A1/SGLT1. Essential for the transporter activity of SLC5A2/SGLT2 but not SLC5A1/SGLT1. This Homo sapiens (Human) protein is PDZK1-interacting protein 1.